The following is a 454-amino-acid chain: Protection of telomeres protein 1b (454 aa).

This sequence belongs to the telombin family. As to quaternary structure, interacts with TRB1, TRB2 and TRB3. As to expression, expressed at low levels in roots, rosette leaves, cauline leaves, stems and flowers.

It is found in the nucleus. The protein resides in the chromosome. The protein localises to the telomere. Negatively regulates telomerase activity and participates in chromosome end protection. Binds RNA non-specifically. Associates with a regulatory Pol III-dependent lncRNA, which represses telomerase activity in response to DNA damage. Binds single-stranded telomeric DNA with weak affinity. The sequence is that of Protection of telomeres protein 1b from Arabidopsis thaliana (Mouse-ear cress).